Here is a 1886-residue protein sequence, read N- to C-terminus: Nuclear pore membrane glycoprotein 210 (1886 aa).

The signal sequence occupies residues 1–26; the sequence is MARASLVQPALWALLLLQVVGPAAAA. Over 27–1808 the chain is Perinuclear space; sequence KLNIPKVLLP…LLSHFLDSYQ (1782 aa). 12 N-linked (GlcNAc...) asparagine glycosylation sites follow: Asn44, Asn337, Asn405, Asn484, Asn681, Asn801, Asn926, Asn1039, Asn1116, Asn1135, Asn1362, and Asn1441. The BIG2 domain maps to 1078 to 1151; it reads FPPFRLIPRK…VQAVDAETGK (74 aa). The chain crosses the membrane as a helical span at residues 1809 to 1829; that stretch reads VMFFTFFALLAGTAVTIIAYH. Over 1830 to 1886 the chain is Cytoplasmic; that stretch reads TVCAPRELASPLALTPRASPQHSPHYLASSPAAFNTLPSGRKASPPSGLWSPAYASH. At Ser1839 the chain carries Phosphoserine. Thr1844 is modified (phosphothreonine). Residues Ser1873, Ser1876, Ser1880, and Ser1885 each carry the phosphoserine modification.

Belongs to the NUP210 family. As to quaternary structure, forms dimers and possibly higher-order oligomers. In terms of processing, N-glycosylated, but not all potential glycosylation sites may be used. Contains high-mannose type oligosaccharides. Phosphorylated at Ser-1880 in mitosis specifically; not phosphorylated in interphase.

Its subcellular location is the nucleus. It is found in the nuclear pore complex. The protein resides in the nucleus membrane. It localises to the endoplasmic reticulum membrane. In terms of biological role, nucleoporin essential for nuclear pore assembly and fusion, nuclear pore spacing, as well as structural integrity. The chain is Nuclear pore membrane glycoprotein 210 (Nup210) from Mus musculus (Mouse).